The sequence spans 435 residues: rRNA methyltransferase 3A, mitochondrial (435 aa).

The N-terminal 42 residues, 1–42 (MAALMYNVSRGLVMLGERSLFQRERYQILVNSRRFLRGLRRR), are a transit peptide targeting the mitochondrion. Residues 314–324 (KQLVSGQTENV) are compositionally biased toward polar residues. Residues 314–351 (KQLVSGQTENVSSDDYSESDSDDDDDEEEDEDSLPHVK) are disordered. Acidic residues predominate over residues 328-345 (DYSESDSDDDDDEEEDED). Residues G369 and L402 each coordinate S-adenosyl-L-methionine.

The protein belongs to the class IV-like SAM-binding methyltransferase superfamily. RNA methyltransferase TrmH family.

The protein resides in the mitochondrion. The catalysed reaction is a uridine in rRNA + S-adenosyl-L-methionine = a 2'-O-methyluridine in rRNA + S-adenosyl-L-homocysteine + H(+). Its function is as follows. S-adenosyl-L-methionine-dependent 2'-O-ribose methyltransferase that catalyzes the formation of 2'-O-methylguanosine at position 1485 (Gm1485) in the mitochondrial large subunit ribosomal RNA (mtLSU rRNA), a conserved modification in the peptidyl transferase domain of the mtLSU rRNA. Also required for formation of 2'-O-methyluridine at position 1484 (Um1484) mediated by MRM2. This is rRNA methyltransferase 3A, mitochondrial (mrm3a) from Danio rerio (Zebrafish).